Reading from the N-terminus, the 230-residue chain is 2-phytyl-1,4-naphtoquinone methyltransferase (230 aa).

It belongs to the class I-like SAM-binding methyltransferase superfamily. MenG/UbiE family.

The catalysed reaction is demethylphylloquinol + S-adenosyl-L-methionine = phylloquinol + S-adenosyl-L-homocysteine + H(+). It participates in cofactor biosynthesis; phylloquinone biosynthesis. In terms of biological role, methyltransferase required for the conversion of 2-phytyl-1,4-beta-naphthoquinol to phylloquinol. In Nostoc punctiforme (strain ATCC 29133 / PCC 73102), this protein is 2-phytyl-1,4-naphtoquinone methyltransferase.